A 3938-amino-acid chain; its full sequence is MGNEASLEGGAGEGPLPPGGSGLGPGPGAGKPPSALAGGGQLPVAGAARAAGPPTPGLGLVPGPGPGPGPGSVSRRLDPKEPLGSQRATSPTPKQASATAPGRESPRETRAQGLSGQEAEGPRRTLQVDSRTQRSGRSPSVSPDRGSTPTSPYSVPQIAPLPSSTLCPICKTSDLTSTSSQPNFNTCTQCHNKVCNQCGFNPNPHLTQVKEWLCLNCQMQRALGMDMTTAPRSKSQQQLHSPALSPAHSPAKQPLGKPEQERSRSPGATQSGPRQAEAARATSVPGPTQATAPPEVGRVSPQPPLSTKPSTAEPRPPAGEAQGKSATTVPSGLGAAEQTQGGLTGKLFGLGASLLTQASTLMSVQPEADTQGQPSPSKGPPKIVFSDASKEAGPRPPGSGPGPGPTPGAKTEPGPRTGPGSGPGALAKTGGTPSPKHGRADHQAASKAAAKPKTMPKERAACPLCQAELNVGSRGPANYNTCTACKLRVCTLCGFNPTPHLVEKTEWLCLNCQTKRLLEGSLGEPAPLPLPTPQEPPAGVPQRAAGASPLKQKGPQGPGQPSGSLPPKASPQAAKASPQAAKASPQAKPLRASEPSKTSSSAPEKKTGIPVKAEPVPKPPPETAVPPGTPKAKSGVKRTDPATPVVKPVPEAPKSGEAEEPVPKPYSQDLSRSPQSLSDTGYSSDGVSSSQSEITGVVQQEVEQLDSAGVTGPRPPSPSELHKVGSSMRPSLEAQAVAPSGEWSKPPSGSAVEDQKRRPHSLSIMPEAFDSDEELGDILEEDDSLAMGRQREQQDTAESSDDFGSQLRHDYVEDSSEGGLSPLPPQPPARADMTDEEFMRRQILEMSAEEDNLEEDDTAVSGRGLAKHGAQKASARPRPESSQESVALPKRRLPHNATTGYEELLSEEGPAEPTDGALQGGLRRFKTIGLNSTGRLWSTSLDLGQGSDPNLDREPELEMESLTGSPEDRSRGEHSSTLPASTPSYTSGTSPTSLSSLEEDSDSSPSRRQRLEEAKQQRKARHRSHGPLLPTIEDSSEEEELREEEELLREQEKMREVEQQRIRSTARKTRRDKEELRAQRRRERSKTPPSNLSPIEDASPTEELRQAAEMEELHRSSCSEYSPSPSLDSEAETLDGGPTRLYKSGSEYNLPAFMSLCSPTETPSGSSTTPSSGRPLKSAEEAYEDMMRKAELLQRQQGQAAGARGPHGGPSQPTGPRSQGSFEYQDTLDHDYGGRASQPAADGTPAGLGATVYEEILQTSQSIARMRQASSRDLAFTEDKKKEKQFLNAESAYMDPMKQNGGPLTPGTSPTQLAAPVSFPTSTSSDSSGGRVIPDVRVTQHFAKEPQEPLKLHSSPASPSLASKEVGMTFSQGPGTPATTAMAPCPASLPRGYMTPAGPERSPSTSSTIHSYGQPPTTANYGSQTEELPHAPSGPAGSGRASREKPLSGGDGEVGPPQPSRGYSYFTGSSPPLSPSTPSESPTFSPSKLGPRATAEFSTQTPSLTPSSDIPRSVGTPSPMVAQGTQTPHRPSTPRLVWQQSSQEAPVMVITLASDASSQTRMVHASASTSPLCSPTDSQPASHSYSQTTPPSASQMPSEPAGPPGFPRAPSAGVDGPLALYGWGALPAENISLCRISSVPGTSRVEPGPRPPGTAVVDLRTAVKPTPIILTDQGMDLTSLAVEARKYGLALDPVPGRQSTAVQPLVINLNAQEQTHTFLATATTVSITMASSVLMAQQKQPVVYGDPFQSRLDFGQGSGSPVCLAQVKQVEQAVQTAPYRGGPRGRPREAKFARYNLPNQVTPLARRDILITQMGTAQSVSLKPGPVPEPGAEPHRATPAELRAHALPGTRKPHTVVVQMGEGAAGTVTTLLPEEPAGALDLTGMRPESRLACCDMAYKFPFGSSCTGTFHPAPSAPDKSVTDAALPGQSSGPFYSPRDPEPPEPLTFRAQGVVGPGPHEEQRPYPQGLPGRLYSSMSDTNLAEAGLNYHAQRIGQLFQGPGRDSAVDLSSLKHSYSLGFADGRYLGQGLQYGSFTDLRHPTDLLSHPLPMRPYSSVSNIYSDHRYGPRGDAVGFQEASLAQYSATTAREISRMCAALNSMDQYGGRHGGGSGGPDLVPYQPQHGPGLNAPQGLASLRSGLLGNPTYPEGQPSPGNLAQYGPAASQGTAVRQLLPSTATVRAADGMIYSTINTPIAATLPITTQPASVLRPMVRGGMYRPYGSGGVTAVPLTSLTRVPMIAPRVPLGPAGLYRYPAPSRFPIASTIPPAEGPVYLGKPAAAKASGAGGPPRPELPAGGAREEPLSTTAPPAVIKEAPVAQAPAPPPGQKPAGDAAAGSGSGVLGRPVMEKEEASQEDRQRKQQEQLLQLERERVELEKLRQLRLQEELERERVELQRHREEEQLLVQRELQELQTIKHHVLQQQQEERQAQFALQREQLAQQRLQLEQIQQLQQQLQQQLEEQKQRQKAPFPATCEAPSRGPPPAATELAQNGQYWPPLTHTAFIAVAGTEGPGQAREPVLHRGLPSSASDMSLQTEEQWEAGRSGIKKRHSMPRLRDACEPESGPDPSTVRRIADSSVQTDDEEGEGRYLLTRRRRTRRSADCSVQTDDEDNAEWEQPVRRRRSRLSRHSDSGSDSKHEASASSSAAAAAARAMSSVGIQTISDCSVQTEPEQLPRVSPAIHITAATDPKVEIVRYISAPEKTGRGESLACQTEPDGQAQGVAGPQLIGPTAISPYLPGIQIVTPGALGRFEKKKPDPLEIGYQAHLPPESLSQLVSRQPPKSPQVLYSPVSPLSPHRLLDTSFASSERLNKAHVSPQKQFIADSTLRQQTLPRPMKTLQRSLSDPKPLSPTAEESAKERFSLYQHQGGLGSQVSALPPNGLVRKVKRTLPSPPPEEAHLPLAGQVPSQLYAASLLQRGLAGPTTVPATKASLLRELDRDLRLVEHESTKLRKKQAELDEEEKEIDAKLKYLELGITQRKESLAKDRVGRDYPPLRGLGEHRDYLSDSELNQLRLQGCTTPAGQYVDYPASAAVPATPSGPTAFQQPRFPPAATQYTAGSSGPTQNGFLAHQAPTYTGPSTYPAPTYPPGTSYPAEPGLPSQPAFHPTGHYAAPTPMPTTQSAPFPVQADSHAAHQKPRQTSLADLEQKVPTNYEVISSPAVTVSSTPSETGYSGPAVSSSYEHGKAPEHPRGGDRSSVSQSPAPTYPSDSHYTSLEQNVPRNYVMIDDISELTKDSTPTASDSQRPEPLGPGGVSGRPGKDPGEPAVLEGPTLPCCYGRGEEESEEDSYDPRGKSGHHRSMESNGRPASTHYYSDSDYRHGARADKYGPGPMGPKHPSKNLAPAAISSKRSKHRKQGMEQKISKFSPIEEAKDVESDLASYPPPTVSSSLTSRSRKFQDEITYGLKKNVYEQQRYYGVSSRDTAEEDDRMYGGSSRSRVASAYSGEKLSSHDFSSRSKGYERERETAQRLQKAGPKPSSLSMAHGRARPPMRSQASEEESPVSPLGRPRPAGGALPPGDTCPQFCSSHSMPDVQEHVKDGPRAHAYKREEGYILDDSHCVVSDSEAYHLGQEETDWFDKPRDARSDRFRHHGGHTVSSSQKRGPARHSYHDYDEPPEEGLWPHDEGGPGRHTSAKEHRHHGDHGRHSGRHAGEEPGRRAARPHARDMGRHETRPHPQASPAPAMQKKGQPGYPSSADYSQPSRAPSAYHHASDSKKGSRQAHSGPTVLQPKPEAQAQPQMQGRQAVPGPQQSQPPSSRQTPSGTASRQPQTQQQQQQQQQQQQQQQQQQQQQQQQGLGQQAPQQAPSQARLQQQSQPTTRSTAPAASHPAGKPQPGPTTAPGPQPAGLPRAEQAGSSKPAAKAPQQGRAPQAQSAPGPAGAKTGARPGGTPGAPAGQPAAEGESVFSKILPGGAAEQAGKLTEAVSAFGKKFSSFW.

A disordered region spans residues 1–158 (MGNEASLEGG…PTSPYSVPQI (158 aa)). A lipid anchor (N-myristoyl glycine) is attached at Gly2. The span at 9-29 (GGAGEGPLPPGGSGLGPGPGA) shows a compositional bias: gly residues. Over residues 31 to 61 (KPPSALAGGGQLPVAGAARAAGPPTPGLGLV) the composition is skewed to low complexity. The interval 62-70 (PGPGPGPGP) is 4 X 2 AA tandem repeats of P-G. 2 stretches are compositionally biased toward polar residues: residues 86-98 (QRAT…QASA) and 127-154 (QVDS…SPYS). Phosphoserine is present on Ser142. An Omega-N-methylarginine modification is found at Arg145. 2 C4-type zinc fingers span residues 167 to 190 (CPIC…CTQC) and 195 to 217 (CNQC…CLNC). Disordered regions lie at residues 228-346 (TTAP…LTGK) and 361-456 (LMSV…KTMP). Over residues 230 to 240 (APRSKSQQQLH) the composition is skewed to polar residues. Phosphoserine occurs at positions 241 and 245. Polar residues predominate over residues 361 to 376 (LMSVQPEADTQGQPSP). A compositionally biased stretch (pro residues) spans 394 to 406 (PRPPGSGPGPGPT). 2 C4-type zinc fingers span residues 462–485 (CPLC…CTAC) and 490–512 (CTLC…CLNC). 4 disordered regions span residues 523 to 921 (GEPA…LQGG), 934 to 1247 (GRLW…TPAG), 1294 to 1541 (MDPM…WQQS), and 1561 to 1611 (RMVH…RAPS). Residues 526–539 (APLPLPTPQEPPAG) are compositionally biased toward pro residues. Low complexity predominate over residues 548 to 589 (SPLKQKGPQGPGQPSGSLPPKASPQAAKASPQAAKASPQAKP). A run of 3 repeats spans residues 568–574 (KASPQAA), 575–581 (KASPQAA), and 582–588 (KASPQAK). Residues 568 to 588 (KASPQAAKASPQAAKASPQAK) form a 3 X 7 AA tandem repeats of K-A-S-P-Q-A-[AK] region. A compositionally biased stretch (pro residues) spans 616–629 (VPKPPPETAVPPGT). Over residues 668-677 (QDLSRSPQSL) the composition is skewed to polar residues. Over residues 678-692 (SDTGYSSDGVSSSQS) the composition is skewed to low complexity. The span at 693-702 (EITGVVQQEV) shows a compositional bias: polar residues. 2 stretches are compositionally biased toward acidic residues: residues 769–784 (FDSD…EDDS) and 847–858 (SAEEDNLEEDDT). Omega-N-methylarginine is present on Arg863. Ser965 bears the Phosphoserine mark. Residues 979-996 (PASTPSYTSGTSPTSLSS) are compositionally biased toward low complexity. Positions 1032 to 1087 (IEDSSEEEELREEEELLREQEKMREVEQQRIRSTARKTRRDKEELRAQRRRERSKT) form a coiled coil. Acidic residues predominate over residues 1034–1047 (DSSEEEELREEEEL). 2 positions are modified to phosphoserine: Ser1035 and Ser1036. Over residues 1048–1061 (LREQEKMREVEQQR) the composition is skewed to basic and acidic residues. Phosphoserine is present on Ser1085. A Phosphothreonine modification is found at Thr1087. 2 positions are modified to phosphoserine: Ser1093 and Ser1099. Positions 1102 to 1117 (EELRQAAEMEELHRSS) are enriched in basic and acidic residues. 2 stretches are compositionally biased toward low complexity: residues 1118-1128 (CSEYSPSPSLD) and 1158-1175 (SPTE…SGRP). A coiled-coil region spans residues 1176-1203 (LKSAEEAYEDMMRKAELLQRQQGQAAGA). The segment covering 1177 to 1192 (KSAEEAYEDMMRKAEL) has biased composition (basic and acidic residues). A compositionally biased stretch (low complexity) spans 1194-1204 (QRQQGQAAGAR). Polar residues predominate over residues 1211 to 1224 (SQPTGPRSQGSFEY). A Phosphoserine modification is found at Ser1221. Residues 1318–1328 (SFPTSTSSDSS) are compositionally biased toward low complexity. Thr1339 carries an O-linked (GlcNAc) threonine glycan. Residues 1342-1351 (FAKEPQEPLK) are compositionally biased toward basic and acidic residues. Composition is skewed to low complexity over residues 1352 to 1364 (LHSS…LASK) and 1374 to 1386 (PGTP…APCP). O-linked (GlcNAc) threonine glycosylation occurs at Thr1380. Over residues 1402-1426 (SPSTSSTIHSYGQPPTTANYGSQTE) the composition is skewed to polar residues. Ser1470, Ser1479, and Ser1481 each carry phosphoserine. Over residues 1476–1487 (STPSESPTFSPS) the composition is skewed to low complexity. 2 stretches are compositionally biased toward polar residues: residues 1496–1510 (EFST…SSDI) and 1561–1597 (RMVH…SQMP). Residues Arg1780 and Arg1784 each carry the omega-N-methylarginine modification. Arg1794 is modified (asymmetric dimethylarginine; alternate). Arg1794 is subject to Omega-N-methylarginine; alternate. Omega-N-methylarginine is present on Arg1806. The interval 1914 to 1964 (PSAPDKSVTDAALPGQSSGPFYSPRDPEPPEPLTFRAQGVVGPGPHEEQRP) is disordered. A glycan (O-linked (GlcNAc) threonine) is linked at Thr1922. Ser1978 and Ser2034 each carry phosphoserine. 2 positions are modified to omega-N-methylarginine: Arg2039 and Arg2069. An asymmetric dimethylarginine mark is found at Arg2243, Arg2253, and Arg2259. The tract at residues 2280–2305 (AAKASGAGGPPRPELPAGGAREEPLS) is disordered. Residue Thr2307 is glycosylated (O-linked (GlcNAc) threonine). Disordered stretches follow at residues 2318 to 2343 (VAQA…SGVL) and 2461 to 2486 (EEQK…PPAA). Residues 2345 to 2470 (RPVMEKEEAS…EEQKQRQKAP (126 aa)) are a coiled coil. The O-linked (GlcNAc) threonine glycan is linked to Thr2510. The segment at 2513–2648 (PGQAREPVLH…HEASASSSAA (136 aa)) is disordered. Residues 2527-2537 (SSASDMSLQTE) are compositionally biased toward polar residues. Residue Ser2564 is modified to Phosphoserine. A phosphothreonine mark is found at Thr2581 and Thr2608. The segment covering 2629-2641 (RHSDSGSDSKHEA) has biased composition (basic and acidic residues). An O-linked (GlcNAc) threonine glycan is attached at Thr2685. The tract at residues 2715 to 3263 (EPDGQAQGVA…GGVSGRPGKD (549 aa)) is interaction with DAO. 3 positions are modified to phosphoserine: Ser2796, Ser2845, and Ser2851. Residues 2839–2859 (TLQRSLSDPKPLSPTAEESAK) are disordered. Thr2930 is a glycosylation site (O-linked (GlcNAc) threonine). Positions 2933 to 2975 (SLLRELDRDLRLVEHESTKLRKKQAELDEEEKEIDAKLKYLEL) form a coiled coil. A sufficient for binding to ERC2 region spans residues 2934–2996 (LLRELDRDLR…DRVGRDYPPL (63 aa)). Ser3007 carries the post-translational modification Phosphoserine. Residues 3055–3068 (TQYTAGSSGPTQNG) show a composition bias toward polar residues. Disordered stretches follow at residues 3055 to 3148 (TQYT…ADLE), 3162 to 3399 (AVTV…SRKF), 3414 to 3546 (QQRY…PRAH), and 3569 to 3910 (YHLG…VFSK). The span at 3184 to 3196 (EHGKAPEHPRGGD) shows a compositional bias: basic and acidic residues. The segment covering 3198 to 3222 (SSVSQSPAPTYPSDSHYTSLEQNVP) has biased composition (polar residues). A Phosphoserine modification is found at Ser3286. The span at 3304-3315 (ESNGRPASTHYY) shows a compositional bias: polar residues. 3 stretches are compositionally biased toward basic and acidic residues: residues 3316-3328 (SDSD…RADK), 3358-3377 (QGME…KDVE), and 3450-3469 (LSSH…RETA). Ser3368 bears the Phosphoserine mark. Arg3488 is subject to Omega-N-methylarginine. Over residues 3506 to 3520 (PLGRPRPAGGALPPG) the composition is skewed to low complexity. 2 stretches are compositionally biased toward basic and acidic residues: residues 3535–3546 (VQEHVKDGPRAH) and 3578–3588 (WFDKPRDARSD). Residues 3638-3651 (EHRHHGDHGRHSGR) show a composition bias toward basic residues. The span at 3652–3676 (HAGEEPGRRAARPHARDMGRHETRP) shows a compositional bias: basic and acidic residues. Low complexity predominate over residues 3751 to 3820 (PQQSQPPSSR…ARLQQQSQPT (70 aa)). Positions 3772 to 3803 (QTQQQQQQQQQQQQQQQQQQQQQQQQGLGQQA) form a coiled coil. The residue at position 3822 (Arg3822) is an Omega-N-methylarginine. The span at 3834–3848 (KPQPGPTTAPGPQPA) shows a compositional bias: pro residues. 2 stretches are compositionally biased toward low complexity: residues 3860 to 3887 (KPAA…KTGA) and 3894 to 3904 (GAPAGQPAAEG).

In terms of assembly, interacts with PCLO, ERC2/CAST1, RIMS1 and UNC13A. Interacts with TPRG1L. Interacts with DYNLL1 and DYNLL2; these interactions potentially link PTVs to dynein and myosin V motor complexes. Interacts with ATG5; this interaction is important for the regulation of presynaptic autophagy. Interacts (via C-terminus) with TRIO (via N-terminus). Interacts with CTBP1. Interacts with SIAH1; this interaction negatively regulates SIAH1 E3 ligase activity. Interacts (via coiled region) with DAO; the interaction is direct. In terms of processing, myristoylated. The N-terminal myristoylation is not sufficient for presynaptic localization. In terms of tissue distribution, detected at synapses in the stratum lucidum in the hippocampus CA3 region (at protein level).

The protein resides in the cytoplasm. It is found in the presynaptic active zone. It localises to the cytoskeleton. Its subcellular location is the cytoplasmic vesicle. The protein localises to the secretory vesicle. The protein resides in the synaptic vesicle membrane. Functionally, scaffold protein of the presynaptic cytomatrix at the active zone (CAZ) which is the place in the synapse where neurotransmitter is released. After synthesis, participates in the formation of Golgi-derived membranous organelles termed Piccolo-Bassoon transport vesicles (PTVs) that are transported along axons to sites of nascent synaptic contacts. At the presynaptic active zone, regulates the spatial organization of synaptic vesicle cluster, the protein complexes that execute membrane fusion and compensatory endocytosis. Also functions in processes other than assembly such as the regulation of specific presynaptic protein ubiquitination by interacting with SIAH1 or the regulation of presynaptic autophagy by associating with ATG5. Also mediates synapse to nucleus communication leading to reconfiguration of gene expression by associating with the transcriptional corepressor CTBP1 and by subsequently reducing the size of its pool available for nuclear import. Inhibits the activity of the proportion of DAO enzyme that localizes to the presynaptic active zone, which may modulate synaptic transmission. The sequence is that of Protein bassoon from Rattus norvegicus (Rat).